We begin with the raw amino-acid sequence, 126 residues long: Fluoride-specific ion channel FluC (126 aa).

4 helical membrane-spanning segments follow: residues 5-25 (GFVAVGVGAAVGAWLRWFFSV), 36-56 (YGTLASNLVGGYLIGLAVAFF), 69-89 (LAVTGFLGGLTTFSTFSSEVI), and 99-119 (WAMLHLAMHLGGSLLLTAFGI). Glycine 76 and threonine 79 together coordinate Na(+).

It belongs to the fluoride channel Fluc/FEX (TC 1.A.43) family.

It localises to the cell inner membrane. The enzyme catalyses fluoride(in) = fluoride(out). Na(+) is not transported, but it plays an essential structural role and its presence is essential for fluoride channel function. Functionally, fluoride-specific ion channel. Important for reducing fluoride concentration in the cell, thus reducing its toxicity. This Cupriavidus metallidurans (strain ATCC 43123 / DSM 2839 / NBRC 102507 / CH34) (Ralstonia metallidurans) protein is Fluoride-specific ion channel FluC.